A 64-amino-acid polypeptide reads, in one-letter code: Large ribosomal subunit protein bL32 (64 aa).

This sequence belongs to the bacterial ribosomal protein bL32 family.

This chain is Large ribosomal subunit protein bL32, found in Bifidobacterium longum (strain DJO10A).